A 267-amino-acid polypeptide reads, in one-letter code: Small ribosomal subunit protein uS2 (267 aa).

Residues 234 to 267 (DNAEEELAEAISQEEPSAAEELPDDMADNENEFE) are disordered. Positions 250–267 (SAAEELPDDMADNENEFE) are enriched in acidic residues.

Belongs to the universal ribosomal protein uS2 family.

This chain is Small ribosomal subunit protein uS2, found in Dichelobacter nodosus (strain VCS1703A).